The primary structure comprises 120 residues: Large ribosomal subunit protein bL19c (120 aa).

It belongs to the bacterial ribosomal protein bL19 family.

The protein localises to the plastid. It is found in the chloroplast. This chain is Large ribosomal subunit protein bL19c (rpl19), found in Trieres chinensis (Marine centric diatom).